A 581-amino-acid polypeptide reads, in one-letter code: MPESNSAEGSDRSEEQVSGAKVIAQALKTQDVEYMFGVVGIPVTEIALAAQELGIKYIGMRNEQAACYAASAVGYLTGRPGVCLVVSGPGLIHALGGMANANMNCWPLIVIGGSSERNQEAMGAFQEFPQVEACRLYTKFSARPSTIELIPFIIEKAVRSSIYGRPGACYIDIPADFVTLQANVTSIKYKECCMPPPVSMAETSAVCAAASVLRDAKQPLLIIGKGAAYSHAEDSIRKLVEQCSLPFLPTPMGKGVVPDNHPNCVGAARSRALQSADVIVLFGARLNWILHFGLPPRYQADVKFIQIDICAEELGNNVRPSVILLGDIDAVSKQLLEQFDKTPWQCPPDSQWWKTLREKMKSNEAISKELASQKSLPMNYYTVFYHVQEQLPRDSFIVSEGANTMDIGRTMLQNCLPRHRLDAGSFGTMGVGLGFAIAAALVAKDRSPGQRVICVEGDSAFGFSGMEVETICRYNLPIILLVVNNNGIYQGFDADTWEKMLHFQEAATTVPPMCLLPNSHYEQVMTAFGGKGYFVRTPEELQHSLRQALQDTSKPCLLNIMIEPQSTRKAQDFHWLTRSNM.

Phosphoserine occurs at positions 4 and 6. Glu-63 provides a ligand contact to thiamine diphosphate. Lys-354, Lys-361, and Lys-368 each carry N6-succinyllysine. The segment at 404–487 is thiamine pyrophosphate binding; sequence TMDIGRTMLQ…IILLVVNNNG (84 aa). Residues Asp-458 and Asn-485 each contribute to the Mg(2+) site. The Microbody targeting signal signature appears at 579-581; sequence SNM.

It belongs to the TPP enzyme family. In terms of assembly, homotetramer. Mg(2+) is required as a cofactor. Requires thiamine diphosphate as cofactor. Predominanly expressed in liver.

Its subcellular location is the peroxisome. It carries out the reaction a 2-hydroxy-3-methyl fatty acyl-CoA = a 2-methyl-branched fatty aldehyde + formyl-CoA. The enzyme catalyses an (R)-2-hydroxy-long-chain-fatty acyl-CoA = a long-chain fatty aldehyde + formyl-CoA. The catalysed reaction is 2-hydroxy-3-methylhexadecanoyl-CoA = 2-methylpentadecanal + formyl-CoA. It catalyses the reaction 2-hydroxyoctadecanoyl-CoA = heptadecanal + formyl-CoA. It carries out the reaction 2-hydroxyphytanoyl-CoA = 2,6,10,14-tetramethylpentadecanal + formyl-CoA. It functions in the pathway lipid metabolism; fatty acid metabolism. Functionally, peroxisomal 2-OH acyl-CoA lyase involved in the cleavage (C1 removal) reaction in the fatty acid alpha-oxydation in a thiamine pyrophosphate (TPP)-dependent manner. Involved in the degradation of 3-methyl-branched fatty acids like phytanic acid and the shortening of 2-hydroxy long-chain fatty acids. Plays a significant role in the biosynthesis of heptadecanal in the liver. The chain is 2-hydroxyacyl-CoA lyase 1 (Hacl1) from Mus musculus (Mouse).